The primary structure comprises 508 residues: Lysine--tRNA ligase (508 aa).

Mg(2+) contacts are provided by glutamate 403 and glutamate 410.

The protein belongs to the class-II aminoacyl-tRNA synthetase family. As to quaternary structure, homodimer. Requires Mg(2+) as cofactor.

It localises to the cytoplasm. It carries out the reaction tRNA(Lys) + L-lysine + ATP = L-lysyl-tRNA(Lys) + AMP + diphosphate. The chain is Lysine--tRNA ligase from Methanoculleus marisnigri (strain ATCC 35101 / DSM 1498 / JR1).